The primary structure comprises 349 residues: Succinylglutamate desuccinylase (349 aa).

Positions 70, 73, and 166 each coordinate Zn(2+). Glutamate 229 is an active-site residue.

Belongs to the AspA/AstE family. Succinylglutamate desuccinylase subfamily. It depends on Zn(2+) as a cofactor.

It catalyses the reaction N-succinyl-L-glutamate + H2O = L-glutamate + succinate. It participates in amino-acid degradation; L-arginine degradation via AST pathway; L-glutamate and succinate from L-arginine: step 5/5. Transforms N(2)-succinylglutamate into succinate and glutamate. In Burkholderia thailandensis (strain ATCC 700388 / DSM 13276 / CCUG 48851 / CIP 106301 / E264), this protein is Succinylglutamate desuccinylase.